The sequence spans 275 residues: Ribosomal RNA small subunit methyltransferase A (275 aa).

S-adenosyl-L-methionine contacts are provided by N28, L30, G55, E77, D103, and N123.

It belongs to the class I-like SAM-binding methyltransferase superfamily. rRNA adenine N(6)-methyltransferase family. RsmA subfamily.

The protein resides in the cytoplasm. It catalyses the reaction adenosine(1518)/adenosine(1519) in 16S rRNA + 4 S-adenosyl-L-methionine = N(6)-dimethyladenosine(1518)/N(6)-dimethyladenosine(1519) in 16S rRNA + 4 S-adenosyl-L-homocysteine + 4 H(+). Specifically dimethylates two adjacent adenosines (A1518 and A1519) in the loop of a conserved hairpin near the 3'-end of 16S rRNA in the 30S particle. May play a critical role in biogenesis of 30S subunits. This chain is Ribosomal RNA small subunit methyltransferase A, found in Rhizobium johnstonii (strain DSM 114642 / LMG 32736 / 3841) (Rhizobium leguminosarum bv. viciae).